The following is a 158-amino-acid chain: Extracellular giant hemoglobin major globin subunit A2 (158 aa).

Positions 1 to 16 (MKSLIVFACLVAYAAA) are cleaved as a signal peptide. In terms of domain architecture, Globin spans 17–158 (DCTSLNRLLV…MNQIVSGISG (142 aa)). A disulfide bond links Cys-18 and Cys-148. Cys-89 is a hydrogen sulfide binding site. His-110 is a binding site for heme b.

It belongs to the globin family. The 400 kDa hemoglobin consists of a spherical 24-mer arranged as a double layer of dome-shaped dodecamers. Each dodecamer is composed of the 3-fold trimer of the tetramer A1-A2-B1-B2 having one intra-tetramer (A1-B2) disulfide bond and one inter-tetramer (B1-B2) disulfide bond per tetramer.

It is found in the secreted. In terms of biological role, the extracellular giant hemoglobin is able to bind and transport oxygen and hydrosulfide simultaneously and reversibly at two different sites. The chain is Extracellular giant hemoglobin major globin subunit A2 (ghbA2) from Oligobrachia mashikoi (Beard worm).